The primary structure comprises 405 residues: uncharacterized protein (405 aa).

12 consecutive transmembrane segments (helical) span residues 19-39 (IVSI…PLAV), 48-68 (MGFS…ATLL), 85-105 (IVVF…LADI), 129-149 (SFAG…LHIG), 156-176 (GIVT…CYAW), 178-198 (GLQG…LLAL), 224-244 (GMAL…ITLF), 252-272 (GAAF…LLFP), 283-303 (VAMI…TAAM), 309-329 (IGVL…GVVA), 344-364 (TYTV…GLVM), and 366-386 (WAGV…ALLL).

The protein belongs to the major facilitator superfamily. YhhS family.

The protein resides in the cell inner membrane. This is an uncharacterized protein from Salmonella typhi.